The chain runs to 304 residues: Glycine--tRNA ligase alpha subunit (304 aa).

The protein belongs to the class-II aminoacyl-tRNA synthetase family. Tetramer of two alpha and two beta subunits.

The protein resides in the cytoplasm. The catalysed reaction is tRNA(Gly) + glycine + ATP = glycyl-tRNA(Gly) + AMP + diphosphate. In Yersinia pseudotuberculosis serotype O:1b (strain IP 31758), this protein is Glycine--tRNA ligase alpha subunit.